The primary structure comprises 149 residues: Phosphoribosyl-AMP cyclohydrolase (149 aa).

Residue Asp-92 participates in Mg(2+) binding. Cys-93 provides a ligand contact to Zn(2+). The Mg(2+) site is built by Asp-94 and Asp-96. Positions 111 and 118 each coordinate Zn(2+).

Belongs to the PRA-CH family. As to quaternary structure, homodimer. Requires Mg(2+) as cofactor. Zn(2+) is required as a cofactor.

The protein resides in the cytoplasm. The enzyme catalyses 1-(5-phospho-beta-D-ribosyl)-5'-AMP + H2O = 1-(5-phospho-beta-D-ribosyl)-5-[(5-phospho-beta-D-ribosylamino)methylideneamino]imidazole-4-carboxamide. It participates in amino-acid biosynthesis; L-histidine biosynthesis; L-histidine from 5-phospho-alpha-D-ribose 1-diphosphate: step 3/9. Catalyzes the hydrolysis of the adenine ring of phosphoribosyl-AMP. This chain is Phosphoribosyl-AMP cyclohydrolase, found in Rhizobium rhizogenes (strain K84 / ATCC BAA-868) (Agrobacterium radiobacter).